The following is a 194-amino-acid chain: Imidazoleglycerol-phosphate dehydratase (194 aa).

Belongs to the imidazoleglycerol-phosphate dehydratase family.

The protein resides in the cytoplasm. It catalyses the reaction D-erythro-1-(imidazol-4-yl)glycerol 3-phosphate = 3-(imidazol-4-yl)-2-oxopropyl phosphate + H2O. Its pathway is amino-acid biosynthesis; L-histidine biosynthesis; L-histidine from 5-phospho-alpha-D-ribose 1-diphosphate: step 6/9. This is Imidazoleglycerol-phosphate dehydratase from Caldicellulosiruptor bescii (strain ATCC BAA-1888 / DSM 6725 / KCTC 15123 / Z-1320) (Anaerocellum thermophilum).